The chain runs to 284 residues: Exported repetitive protein (284 aa).

The N-terminal stretch at 1–22 (MPNRRRRKLSTAMSAVAALAVA) is a signal peptide. Topologically, residues 23 to 252 (SPCAYFLVYE…MPSIMQAVQN (230 aa)) are extracellular. The disordered stretch occupies residues 80 to 216 (TGSGDASTGL…SPATTSTGGG (137 aa)). The span at 86 to 110 (STGLTGPGLTSPGLTSPGLTSPGLT) shows a compositional bias: low complexity. A run of 12 repeats spans residues 92–96 (PGLTS), 97–101 (PGLTS), 102–106 (PGLTS), 107–111 (PGLTD), 112–116 (PALTS), 117–121 (PGLTP), 144–148 (PALTN), 149–153 (PALTS), 154–158 (PTGAT), 159–163 (PGLTS), 164–168 (PTGLD), and 169–173 (PALGG). A 6 X 5 AA tandem repeats of P-[GA]-L-T-S region spans residues 92–121 (PGLTSPGLTSPGLTSPGLTDPALTSPGLTP). Residues 144-173 (PALTNPALTSPTGATPGLTSPTGLDPALGG) are 6 X 5 AA approximate tandem repeats of P-[ATG]-[LG]-X-X. Over residues 145–165 (ALTNPALTSPTGATPGLTSPT) the composition is skewed to polar residues. The span at 202 to 212 (GTIPSSPATTS) shows a compositional bias: low complexity. The helical transmembrane segment at 253–273 (GGAAAPAASPPVPPIPAAAAV) threads the bilayer. The Cytoplasmic segment spans residues 274–284 (PPTDPITVPVA).

This sequence to M.leprae 28 kDa antigen.

The protein localises to the cell membrane. In terms of biological role, surface-exposed protein required for multiplication and intracellular growth. This is Exported repetitive protein (erp) from Mycobacterium bovis (strain ATCC BAA-935 / AF2122/97).